We begin with the raw amino-acid sequence, 167 residues long: NAD(P)H-quinone oxidoreductase subunit I, chloroplastic (167 aa).

2 consecutive 4Fe-4S ferredoxin-type domains span residues 55–84 (GRIH…VDWK) and 95–124 (LNYS…MTEE). [4Fe-4S] cluster contacts are provided by Cys-64, Cys-67, Cys-70, Cys-74, Cys-104, Cys-107, Cys-110, and Cys-114.

This sequence belongs to the complex I 23 kDa subunit family. As to quaternary structure, NDH is composed of at least 16 different subunits, 5 of which are encoded in the nucleus. [4Fe-4S] cluster is required as a cofactor.

It localises to the plastid. The protein resides in the chloroplast thylakoid membrane. It catalyses the reaction a plastoquinone + NADH + (n+1) H(+)(in) = a plastoquinol + NAD(+) + n H(+)(out). The enzyme catalyses a plastoquinone + NADPH + (n+1) H(+)(in) = a plastoquinol + NADP(+) + n H(+)(out). Functionally, NDH shuttles electrons from NAD(P)H:plastoquinone, via FMN and iron-sulfur (Fe-S) centers, to quinones in the photosynthetic chain and possibly in a chloroplast respiratory chain. The immediate electron acceptor for the enzyme in this species is believed to be plastoquinone. Couples the redox reaction to proton translocation, and thus conserves the redox energy in a proton gradient. The sequence is that of NAD(P)H-quinone oxidoreductase subunit I, chloroplastic from Draba nemorosa (Woodland whitlowgrass).